The chain runs to 149 residues: D-aminoacyl-tRNA deacylase (149 aa).

The Gly-cisPro motif, important for rejection of L-amino acids signature appears at 137–138 (GP).

The protein belongs to the DTD family. In terms of assembly, homodimer.

The protein resides in the cytoplasm. It catalyses the reaction glycyl-tRNA(Ala) + H2O = tRNA(Ala) + glycine + H(+). The enzyme catalyses a D-aminoacyl-tRNA + H2O = a tRNA + a D-alpha-amino acid + H(+). Functionally, an aminoacyl-tRNA editing enzyme that deacylates mischarged D-aminoacyl-tRNAs. Also deacylates mischarged glycyl-tRNA(Ala), protecting cells against glycine mischarging by AlaRS. Acts via tRNA-based rather than protein-based catalysis; rejects L-amino acids rather than detecting D-amino acids in the active site. By recycling D-aminoacyl-tRNA to D-amino acids and free tRNA molecules, this enzyme counteracts the toxicity associated with the formation of D-aminoacyl-tRNA entities in vivo and helps enforce protein L-homochirality. The protein is D-aminoacyl-tRNA deacylase of Halothermothrix orenii (strain H 168 / OCM 544 / DSM 9562).